Consider the following 464-residue polypeptide: Trigger factor (464 aa).

The PPIase FKBP-type domain occupies 162-243 (GDFISIDLSA…VGTVKERELP (82 aa)). Positions 428–464 (GASVDTAELFGNGEADTEEAASTDEVASDSAEGEDQK) are disordered.

The protein belongs to the FKBP-type PPIase family. Tig subfamily.

The protein resides in the cytoplasm. The catalysed reaction is [protein]-peptidylproline (omega=180) = [protein]-peptidylproline (omega=0). Involved in protein export. Acts as a chaperone by maintaining the newly synthesized protein in an open conformation. Functions as a peptidyl-prolyl cis-trans isomerase. This Rhodococcus opacus (strain B4) protein is Trigger factor.